We begin with the raw amino-acid sequence, 487 residues long: Phosphoglucosamine mutase (487 aa).

Ser134 acts as the Phosphoserine intermediate in catalysis. Residues Ser134, Asp277, Asp279, and Asp281 each coordinate Mg(2+). Ser134 carries the post-translational modification Phosphoserine.

This sequence belongs to the phosphohexose mutase family. It depends on Mg(2+) as a cofactor. Post-translationally, activated by phosphorylation.

The catalysed reaction is alpha-D-glucosamine 1-phosphate = D-glucosamine 6-phosphate. Functionally, catalyzes the conversion of glucosamine-6-phosphate to glucosamine-1-phosphate. This Gloeothece citriformis (strain PCC 7424) (Cyanothece sp. (strain PCC 7424)) protein is Phosphoglucosamine mutase.